The sequence spans 272 residues: Magnetosome protein MamQ 1 (272 aa).

Residues 1-46 (MALGDANVGSAPGVDFSALQRVKQSEELLAQLYVVEETPRRLGRGP) lie on the Cytoplasmic side of the membrane. A helical membrane pass occupies residues 47 to 67 (VHALMVISVLSVVAFIATLLM). Over 68–272 (RYNTFVTMSE…PLNHAQDIKK (205 aa)) the chain is Lumenal.

It belongs to the LemA family.

It localises to the magnetosome membrane. Essential for magnetosome formation. Can be used to induce magnetosome formation. In Paramagnetospirillum magneticum (strain ATCC 700264 / AMB-1) (Magnetospirillum magneticum), this protein is Magnetosome protein MamQ 1 (mamQ1).